The primary structure comprises 637 residues: Biosynthetic arginine decarboxylase (637 aa).

Lysine 101 bears the N6-(pyridoxal phosphate)lysine mark. Phenylalanine 286–tyrosine 296 contacts substrate.

Belongs to the Orn/Lys/Arg decarboxylase class-II family. SpeA subfamily. The cofactor is Mg(2+). Pyridoxal 5'-phosphate is required as a cofactor.

It catalyses the reaction L-arginine + H(+) = agmatine + CO2. The protein operates within amine and polyamine biosynthesis; agmatine biosynthesis; agmatine from L-arginine: step 1/1. In terms of biological role, catalyzes the biosynthesis of agmatine from arginine. This Shewanella baltica (strain OS223) protein is Biosynthetic arginine decarboxylase.